Reading from the N-terminus, the 140-residue chain is Alkaline proteinase inhibitor (140 aa).

Positions 1 to 25 are cleaved as a signal peptide; sequence MPSSVQATAGLLATLMMFCGEVAMA.

This sequence belongs to the protease inhibitor I38 family.

The protein resides in the periplasm. In terms of biological role, inhibitor of the alkaline protease. The protein is Alkaline proteinase inhibitor (inh) of Pseudomonas brassicacearum (strain NFM421).